The primary structure comprises 310 residues: Tyrosine recombinase XerC (310 aa).

The Core-binding (CB) domain occupies 1 to 92 (MDELIKEFDR…SLRAFFKYLH (92 aa)). The 188-residue stretch at 113–300 (YIPAVLSVDE…SVNRLMAVYD (188 aa)) folds into the Tyr recombinase domain. Active-site residues include Arg153, Lys177, His252, Arg255, and His278. Tyr287 serves as the catalytic O-(3'-phospho-DNA)-tyrosine intermediate.

The protein belongs to the 'phage' integrase family. XerC subfamily. As to quaternary structure, forms a cyclic heterotetrameric complex composed of two molecules of XerC and two molecules of XerD.

Its subcellular location is the cytoplasm. Its function is as follows. Site-specific tyrosine recombinase, which acts by catalyzing the cutting and rejoining of the recombining DNA molecules. The XerC-XerD complex is essential to convert dimers of the bacterial chromosome into monomers to permit their segregation at cell division. It also contributes to the segregational stability of plasmids. The polypeptide is Tyrosine recombinase XerC (Syntrophus aciditrophicus (strain SB)).